The chain runs to 306 residues: Elongation factor Ts (306 aa).

The involved in Mg(2+) ion dislocation from EF-Tu stretch occupies residues 80–83 (TDFV).

The protein belongs to the EF-Ts family.

The protein localises to the cytoplasm. Functionally, associates with the EF-Tu.GDP complex and induces the exchange of GDP to GTP. It remains bound to the aminoacyl-tRNA.EF-Tu.GTP complex up to the GTP hydrolysis stage on the ribosome. The protein is Elongation factor Ts of Clostridium novyi (strain NT).